The chain runs to 75 residues: Exodeoxyribonuclease 7 small subunit (75 aa).

It belongs to the XseB family. As to quaternary structure, heterooligomer composed of large and small subunits.

Its subcellular location is the cytoplasm. It carries out the reaction Exonucleolytic cleavage in either 5'- to 3'- or 3'- to 5'-direction to yield nucleoside 5'-phosphates.. Bidirectionally degrades single-stranded DNA into large acid-insoluble oligonucleotides, which are then degraded further into small acid-soluble oligonucleotides. The polypeptide is Exodeoxyribonuclease 7 small subunit (Listeria monocytogenes serotype 4b (strain CLIP80459)).